Here is a 513-residue protein sequence, read N- to C-terminus: ATP synthase subunit alpha (513 aa).

169 to 176 (GDRQIGKT) lines the ATP pocket.

It belongs to the ATPase alpha/beta chains family. In terms of assembly, F-type ATPases have 2 components, CF(1) - the catalytic core - and CF(0) - the membrane proton channel. CF(1) has five subunits: alpha(3), beta(3), gamma(1), delta(1), epsilon(1). CF(0) has three main subunits: a(1), b(2) and c(9-12). The alpha and beta chains form an alternating ring which encloses part of the gamma chain. CF(1) is attached to CF(0) by a central stalk formed by the gamma and epsilon chains, while a peripheral stalk is formed by the delta and b chains.

It localises to the cell inner membrane. The enzyme catalyses ATP + H2O + 4 H(+)(in) = ADP + phosphate + 5 H(+)(out). Produces ATP from ADP in the presence of a proton gradient across the membrane. The alpha chain is a regulatory subunit. The polypeptide is ATP synthase subunit alpha (Shewanella halifaxensis (strain HAW-EB4)).